The primary structure comprises 465 residues: GTPase Der (465 aa).

2 EngA-type G domains span residues 27 to 190 and 202 to 375; these read PVLA…PEAP and RRIA…AGWE. GTP contacts are provided by residues 33 to 40, 80 to 84, 142 to 145, 208 to 215, 255 to 259, and 320 to 323; these read GRPNVGKS, DTGGW, NKVD, DTAGI, and NKWD. Positions 376-458 constitute a KH-like domain; the sequence is TRVPTGRLNA…PIHISVRVRE (83 aa).

This sequence belongs to the TRAFAC class TrmE-Era-EngA-EngB-Septin-like GTPase superfamily. EngA (Der) GTPase family. Associates with the 50S ribosomal subunit.

Functionally, GTPase that plays an essential role in the late steps of ribosome biogenesis. This chain is GTPase Der, found in Streptomyces coelicolor (strain ATCC BAA-471 / A3(2) / M145).